The sequence spans 229 residues: Meiotically up-regulated gene 31 protein (229 aa).

2 disordered regions span residues 16–68 (EDSA…EEDK) and 189–229 (GLPE…TTWA).

The protein localises to the endoplasmic reticulum. Its function is as follows. Has a role in meiosis. The sequence is that of Meiotically up-regulated gene 31 protein (mug31) from Schizosaccharomyces pombe (strain 972 / ATCC 24843) (Fission yeast).